Here is a 286-residue protein sequence, read N- to C-terminus: Putative sugar uptake protein lin0215 (286 aa).

Transmembrane regions (helical) follow at residues 4–26 (MIALIPALLWGTVPLIITKFGGS), 33–55 (GMTLGALTFAVIVFFFTDPVYTL), 114–136 (LRIILGFIALALIVGGIFLTSYA), 149–167 (GLITLVISSLGYVGLVVLI), 177–194 (AILPQAIGMVLSALIMTH), 207–226 (LLLIIPGMIWAAGNVAMVHA), 230–252 (VGVATGFSLSQLGVVISTIGGIV), and 264–283 (LYVIVGVVLVVLGGILIGVA).

It belongs to the GRP transporter (TC 2.A.7.5) family.

It is found in the cell membrane. The protein is Putative sugar uptake protein lin0215 of Listeria innocua serovar 6a (strain ATCC BAA-680 / CLIP 11262).